The sequence spans 200 residues: Large ribosomal subunit protein uL4 (200 aa).

Positions 43 to 71 (RAQKTRAEVSGSGKKPWRQKGTGRARSGD) are disordered.

Belongs to the universal ribosomal protein uL4 family. In terms of assembly, part of the 50S ribosomal subunit.

Its function is as follows. One of the primary rRNA binding proteins, this protein initially binds near the 5'-end of the 23S rRNA. It is important during the early stages of 50S assembly. It makes multiple contacts with different domains of the 23S rRNA in the assembled 50S subunit and ribosome. Forms part of the polypeptide exit tunnel. This Actinobacillus pleuropneumoniae serotype 5b (strain L20) protein is Large ribosomal subunit protein uL4.